Reading from the N-terminus, the 123-residue chain is Large ribosomal subunit protein uL18 (123 aa).

This sequence belongs to the universal ribosomal protein uL18 family. Part of the 50S ribosomal subunit; part of the 5S rRNA/L5/L18/L25 subcomplex. Contacts the 5S and 23S rRNAs.

Its function is as follows. This is one of the proteins that bind and probably mediate the attachment of the 5S RNA into the large ribosomal subunit, where it forms part of the central protuberance. The protein is Large ribosomal subunit protein uL18 of Wolbachia sp. subsp. Brugia malayi (strain TRS).